The primary structure comprises 438 residues: Enolase (438 aa).

The substrate site is built by histidine 159 and glutamate 168. Residue glutamate 211 is the Proton donor of the active site. Residues aspartate 246, glutamate 297, and aspartate 322 each coordinate Mg(2+). Substrate-binding residues include glutamate 297 and aspartate 322. The active-site Proton acceptor is lysine 347. Substrate-binding positions include 374-377 (SHRS) and lysine 398.

Belongs to the enolase family. Homodimer. Mg(2+) serves as cofactor.

It localises to the cytoplasm. The catalysed reaction is (2R)-2-phosphoglycerate = phosphoenolpyruvate + H2O. It functions in the pathway carbohydrate degradation; glycolysis; pyruvate from D-glyceraldehyde 3-phosphate: step 4/5. Involved in osmoadaptation. The polypeptide is Enolase (enoA) (Emericella nidulans (strain FGSC A4 / ATCC 38163 / CBS 112.46 / NRRL 194 / M139) (Aspergillus nidulans)).